Here is a 439-residue protein sequence, read N- to C-terminus: Protein dumpy-20 (439 aa).

The disordered stretch occupies residues 93 to 116; the sequence is GTLSDPSLHGSNSSSSTSDVGSSV. The span at 96–116 shows a compositional bias: low complexity; the sequence is SDPSLHGSNSSSSTSDVGSSV. BED-type zinc fingers lie at residues 135–184 and 349–398; these read PTEN…YQKV and KTEH…YNDV. The Zn(2+) site is built by C154, C157, H172, H177, C368, C371, H386, and H391.

Functionally, involved in cuticle function and is essential for normal morphological development. This Caenorhabditis briggsae protein is Protein dumpy-20 (dpy-20).